Reading from the N-terminus, the 299-residue chain is Taste receptor type 2 member 50 (299 aa).

Methionine 1 is a topological domain (extracellular). Residues 2-22 (IPFLHIFFSVLILVLFVLGNF) form a helical membrane-spanning segment. Residues 23–55 (ANGFIALVNFIDWVKRKKISLADQILTALAVSR) are Cytoplasmic-facing. Residues 56–76 (VGLLWALLLNWYLTELNPAFY) traverse the membrane as a helical segment. Residues 77 to 87 (SVELRITSYNA) lie on the Extracellular side of the membrane. Residues 88–108 (WVVTNHFSMWLAASLSIFYLL) form a helical membrane-spanning segment. The Cytoplasmic portion of the chain corresponds to 109-126 (KIANFSNLSFLNLKRRVR). The helical transmembrane segment at 127–147 (SIILVILLGSLLFLVCHLLAV) threads the bilayer. Residues 148 to 181 (NMDENMWTEEYEGNMTGKMKLRNAAHLSYMTVTT) are Extracellular-facing. Residue asparagine 161 is glycosylated (N-linked (GlcNAc...) asparagine). The chain crosses the membrane as a helical span at residues 182–202 (LWSFIPFMLSLISFLMLIFSL). Residues 203-229 (CKHLKKMQLHGEGSRDPSTTVHIKALQ) lie on the Cytoplasmic side of the membrane. Residues 230–250 (TLISFLLLCAIFFLFLIISVW) form a helical membrane-spanning segment. Residues 251–259 (SPRRLQNEP) are Extracellular-facing. Residues 260-280 (VFMVCKAVGNIYLSFDSFVLI) form a helical membrane-spanning segment. Over 281–299 (WRTKKLKHIFLLILCQIRC) the chain is Cytoplasmic.

The protein belongs to the G-protein coupled receptor T2R family.

It localises to the membrane. Its function is as follows. Receptor that may play a role in the perception of bitterness and is gustducin-linked. May play a role in sensing the chemical composition of the gastrointestinal content. The activity of this receptor may stimulate alpha gustducin, mediate PLC-beta-2 activation and lead to the gating of TRPM5. This Macaca mulatta (Rhesus macaque) protein is Taste receptor type 2 member 50 (TAS2R50).